We begin with the raw amino-acid sequence, 251 residues long: Aspartate/glutamate leucyltransferase (251 aa).

This sequence belongs to the R-transferase family. Bpt subfamily.

It is found in the cytoplasm. The catalysed reaction is N-terminal L-glutamyl-[protein] + L-leucyl-tRNA(Leu) = N-terminal L-leucyl-L-glutamyl-[protein] + tRNA(Leu) + H(+). The enzyme catalyses N-terminal L-aspartyl-[protein] + L-leucyl-tRNA(Leu) = N-terminal L-leucyl-L-aspartyl-[protein] + tRNA(Leu) + H(+). Its function is as follows. Functions in the N-end rule pathway of protein degradation where it conjugates Leu from its aminoacyl-tRNA to the N-termini of proteins containing an N-terminal aspartate or glutamate. This is Aspartate/glutamate leucyltransferase from Stenotrophomonas maltophilia (strain K279a).